Consider the following 502-residue polypeptide: Transmembrane prolyl 4-hydroxylase (502 aa).

A disordered region spans residues 1 to 29; the sequence is MAAAAVTGQRPETAAAEEASRPQWAPPDH. Residues 1-60 are Cytoplasmic-facing; it reads MAAAAVTGQRPETAAAEEASRPQWAPPDHCQAQAAAGLGDGEDAPVRPLCKPRGICSRAY. A helical; Signal-anchor for type II membrane protein membrane pass occupies residues 61 to 81; that stretch reads FLVLMVFVHLYLGNVLALLLF. Residues 82-502 lie on the Lumenal side of the membrane; the sequence is VHYSNGDESS…RAYRDARVEL (421 aa). The segment at 89–111 is disordered; the sequence is ESSDPGPQHRAQGPGPEPTLGPL. EF-hand domains lie at 185–220 and 224–259; these read TMQV…GNGW and PESI…DFHK. Residues D198, N200, D202, H204, E209, D237, D239, D241, and E248 each contribute to the Ca(2+) site. Residues 310-460 enclose the Fe2OG dioxygenase domain; it reads LSEPLQVVRY…KWIANNWINV (151 aa). Fe cation is bound by residues H328 and D330. 2 N-linked (GlcNAc...) asparagine glycosylation sites follow: N348 and N368. Residue E374 participates in Fe cation binding. N-linked (GlcNAc...) asparagine glycosylation is present at N382. Position 451 (K451) interacts with 2-oxoglutarate.

In terms of assembly, homodimer. The cofactor is Fe(2+). Requires L-ascorbate as cofactor. In terms of processing, glycosylated. Widely expressed with highest levels in adult pancreas, heart, skeletal muscle, brain, placenta, kidney and adrenal gland. Expressed at lower levels in epiphyseal cartilage and in fibroblasts.

It localises to the endoplasmic reticulum membrane. It carries out the reaction L-prolyl-[hypoxia-inducible factor alpha subunit] + 2-oxoglutarate + O2 = trans-4-hydroxy-L-prolyl-[hypoxia-inducible factor alpha subunit] + succinate + CO2. Catalyzes the post-translational formation of 4-hydroxyproline in hypoxia-inducible factor (HIF) alpha proteins. Hydroxylates HIF1A at 'Pro-402' and 'Pro-564'. May function as a cellular oxygen sensor and, under normoxic conditions, may target HIF through the hydroxylation for proteasomal degradation via the von Hippel-Lindau ubiquitination complex. In Homo sapiens (Human), this protein is Transmembrane prolyl 4-hydroxylase (P4HTM).